We begin with the raw amino-acid sequence, 96 residues long: Aspartyl/glutamyl-tRNA(Asn/Gln) amidotransferase subunit C (96 aa).

The protein belongs to the GatC family. As to quaternary structure, heterotrimer of A, B and C subunits.

The catalysed reaction is L-glutamyl-tRNA(Gln) + L-glutamine + ATP + H2O = L-glutaminyl-tRNA(Gln) + L-glutamate + ADP + phosphate + H(+). It catalyses the reaction L-aspartyl-tRNA(Asn) + L-glutamine + ATP + H2O = L-asparaginyl-tRNA(Asn) + L-glutamate + ADP + phosphate + 2 H(+). Its function is as follows. Allows the formation of correctly charged Asn-tRNA(Asn) or Gln-tRNA(Gln) through the transamidation of misacylated Asp-tRNA(Asn) or Glu-tRNA(Gln) in organisms which lack either or both of asparaginyl-tRNA or glutaminyl-tRNA synthetases. The reaction takes place in the presence of glutamine and ATP through an activated phospho-Asp-tRNA(Asn) or phospho-Glu-tRNA(Gln). This is Aspartyl/glutamyl-tRNA(Asn/Gln) amidotransferase subunit C from Leptospira borgpetersenii serovar Hardjo-bovis (strain JB197).